The sequence spans 431 residues: Serine hydroxymethyltransferase (431 aa).

122–124 serves as a coordination point for (6S)-5,6,7,8-tetrahydrofolate; the sequence is GHI. N6-(pyridoxal phosphate)lysine is present on lysine 228. Glutamate 245 is a binding site for (6S)-5,6,7,8-tetrahydrofolate.

This sequence belongs to the SHMT family. As to quaternary structure, homodimer. The cofactor is pyridoxal 5'-phosphate.

The protein resides in the cytoplasm. The protein operates within amino-acid biosynthesis; glycine biosynthesis; glycine from L-serine: step 1/1. Its function is as follows. Catalyzes the reversible interconversion of serine and glycine with a modified folate serving as the one-carbon carrier. Also exhibits a pteridine-independent aldolase activity toward beta-hydroxyamino acids, producing glycine and aldehydes, via a retro-aldol mechanism. This is Serine hydroxymethyltransferase from Thermococcus kodakarensis (strain ATCC BAA-918 / JCM 12380 / KOD1) (Pyrococcus kodakaraensis (strain KOD1)).